The sequence spans 432 residues: Adenylosuccinate synthetase (432 aa).

GTP-binding positions include 13-19 (GDEGKGK) and 41-43 (GHT). The active-site Proton acceptor is aspartate 14. The Mg(2+) site is built by aspartate 14 and glycine 41. IMP-binding positions include 14–17 (DEGK), 39–42 (NAGH), threonine 131, arginine 145, glutamine 226, threonine 241, and arginine 305. Residue histidine 42 is the Proton donor of the active site. 301-307 (SVTGRAR) is a substrate binding site. Residues arginine 307, 333–335 (KLD), and 416–418 (STG) each bind GTP.

This sequence belongs to the adenylosuccinate synthetase family. In terms of assembly, homodimer. Requires Mg(2+) as cofactor.

The protein localises to the cytoplasm. It catalyses the reaction IMP + L-aspartate + GTP = N(6)-(1,2-dicarboxyethyl)-AMP + GDP + phosphate + 2 H(+). It participates in purine metabolism; AMP biosynthesis via de novo pathway; AMP from IMP: step 1/2. Its function is as follows. Plays an important role in the de novo pathway of purine nucleotide biosynthesis. Catalyzes the first committed step in the biosynthesis of AMP from IMP. The protein is Adenylosuccinate synthetase of Neisseria meningitidis serogroup C (strain 053442).